Reading from the N-terminus, the 122-residue chain is Large ribosomal subunit protein uL14 (122 aa).

This sequence belongs to the universal ribosomal protein uL14 family. In terms of assembly, part of the 50S ribosomal subunit. Forms a cluster with proteins L3 and L19. In the 70S ribosome, L14 and L19 interact and together make contacts with the 16S rRNA in bridges B5 and B8.

In terms of biological role, binds to 23S rRNA. Forms part of two intersubunit bridges in the 70S ribosome. The chain is Large ribosomal subunit protein uL14 from Trichormus variabilis (strain ATCC 29413 / PCC 7937) (Anabaena variabilis).